Here is a 222-residue protein sequence, read N- to C-terminus: Deoxyribose-phosphate aldolase (222 aa).

The active-site Proton donor/acceptor is the aspartate 89. Lysine 152 serves as the catalytic Schiff-base intermediate with acetaldehyde. Lysine 181 functions as the Proton donor/acceptor in the catalytic mechanism.

Belongs to the DeoC/FbaB aldolase family. DeoC type 1 subfamily.

It localises to the cytoplasm. It catalyses the reaction 2-deoxy-D-ribose 5-phosphate = D-glyceraldehyde 3-phosphate + acetaldehyde. It participates in carbohydrate degradation; 2-deoxy-D-ribose 1-phosphate degradation; D-glyceraldehyde 3-phosphate and acetaldehyde from 2-deoxy-alpha-D-ribose 1-phosphate: step 2/2. In terms of biological role, catalyzes a reversible aldol reaction between acetaldehyde and D-glyceraldehyde 3-phosphate to generate 2-deoxy-D-ribose 5-phosphate. The chain is Deoxyribose-phosphate aldolase from Clostridium novyi (strain NT).